A 461-amino-acid polypeptide reads, in one-letter code: NADP-specific glutamate dehydrogenase (461 aa).

Lys115 is an active-site residue.

Belongs to the Glu/Leu/Phe/Val dehydrogenases family. As to quaternary structure, homohexamer.

It catalyses the reaction L-glutamate + NADP(+) + H2O = 2-oxoglutarate + NH4(+) + NADPH + H(+). The sequence is that of NADP-specific glutamate dehydrogenase (GDH) from Penicillium chrysogenum (Penicillium notatum).